A 333-amino-acid polypeptide reads, in one-letter code: Procathepsin L (333 aa).

An N-terminal signal peptide occupies residues 1–17 (MNPTFILAALCLGIASA). Positions 18–113 (TLTFNHSLEA…KVFQEPLFYE (96 aa)) are cleaved as a propeptide — activation peptide. Glu122 contributes to the Zn(2+) binding site. Intrachain disulfides connect Cys135/Cys178 and Cys169/Cys211. The active site involves Cys138. Zn(2+) is bound by residues Glu163, Asp184, Glu199, Glu205, Glu209, Asp227, Asp250, His253, Asp273, and Asp275. Cys269 and Cys322 are disulfide-bonded. His276 is a catalytic residue. Positions 289 to 291 (ESD) are excised as a propeptide. The active site involves Asn300.

It belongs to the peptidase C1 family. As to quaternary structure, dimer of a heavy and a light chain linked by disulfide bonds. Interacts with Long isoform of CD74/Ii chain; the interaction stabilizes the conformation of mature CTSL. During export along the endocytic pathway, pro-CTSL undergoes several proteolytic cleavages to generate the CTSL single-chain and two-chain mature forms, composed of a heavy chain linked to a light chain by disulfide bonds. Autocleavage; produces the single-chain CTSL after cleavage of the propeptide. The cleavage can be intermolecular.

Its subcellular location is the lysosome. The protein resides in the apical cell membrane. It localises to the cytoplasmic vesicle. It is found in the secretory vesicle. The protein localises to the chromaffin granule. Its subcellular location is the secreted. The protein resides in the extracellular space. It catalyses the reaction Specificity close to that of papain. As compared to cathepsin B, cathepsin L exhibits higher activity toward protein substrates, but has little activity on Z-Arg-Arg-NHMec, and no peptidyl-dipeptidase activity.. Its activity is regulated as follows. Inhibited by the propeptide produced by autocleavage. Long isoform of CD74/Ii chain stabilizes the conformation of mature CTSL by binding to its active site and serving as a chaperone to help maintain a pool of mature enzyme in endocytic compartments and extracellular space of APCs. IFNG enhances the conversion into the CTSL mature and active form. Inhibited by CST6. Inhibited by the glycopeptide antibiotic teicoplanin. Inhibited by amantadine. Its function is as follows. Thiol protease important for the overall degradation of proteins in lysosomes. Plays a critical for normal cellular functions such as general protein turnover, antigen processing and bone remodeling. Involved in the solubilization of cross-linked TG/thyroglobulin and in the subsequent release of thyroid hormone thyroxine (T4) by limited proteolysis of TG/thyroglobulin in the thyroid follicle lumen. In neuroendocrine chromaffin cells secretory vesicles, catalyzes the prohormone proenkephalin processing to the active enkephalin peptide neurotransmitter. In thymus, regulates CD4(+) T cell positive selection by generating the major histocompatibility complex class II (MHCII) bound peptide ligands presented by cortical thymic epithelial cells. Also mediates invariant chain processing in cortical thymic epithelial cells. Major elastin-degrading enzyme at neutral pH. Accumulates as a mature and active enzyme in the extracellular space of antigen presenting cells (APCs) to regulate degradation of the extracellular matrix in the course of inflammation. Secreted form generates endostatin from COL18A1. Critical for cardiac morphology and function. Plays an important role in hair follicle morphogenesis and cycling, as well as epidermal differentiation. Required for maximal stimulation of steroidogenesis by TIMP1. The protein is Procathepsin L (CTSL) of Chlorocebus aethiops (Green monkey).